The following is an 860-amino-acid chain: SH2 domain-containing protein 3C (860 aa).

S22 carries the post-translational modification Phosphoserine. Disordered stretches follow at residues 51 to 117 and 130 to 180; these read EATQ…PPGL and PLED…PEAG. A compositionally biased stretch (basic and acidic residues) spans 162–175; the sequence is ERPPRDVHSERAAG. Residues 220–319 form the SH2 domain; sequence WYHGRIPREV…QSGAIIYCPV (100 aa). 2 positions are modified to phosphotyrosine: Y278 and Y283. A disordered region spans residues 335-537; the sequence is GQGSSKPASP…LSENGAPEGD (203 aa). A Phosphoserine modification is found at S359. Low complexity-rich tracts occupy residues 405–420, 427–443, and 479–490; these read SPMS…PAYS, AAPA…SPVA, and SPSPSLSSYSDP. S440 is modified (phosphoserine). The 269-residue stretch at 586–854 folds into the Ras-GEF domain; it reads DARTLARHVT…TALSHKLEPA (269 aa). Phosphotyrosine is present on Y793.

Component of a complex comprised of SH2D3C, BCAR1/CAS, and CRK. Within the complex, interacts with CRK and (via C-terminus) with BCAR1/CAS (via C-terminus). Interacts with NEDD9/HEF1. Interacts with EPHB2. As to quaternary structure, interacts with NEDD9/HEF1. Interacts with BCAR1/CAS. Interacts with PTK2B. In terms of assembly, interacts (via C-terminus) with BCAR1/CAS (via C-terminus). Interacts with IGF1. In terms of processing, phosphorylated by MAPK/ERK upon T-cell receptor stimulation in T-cells. Ubiquitously expressed.

Its subcellular location is the cytoplasm. It localises to the cell membrane. The protein resides in the cell projection. It is found in the axon. The protein localises to the ruffle membrane. In terms of biological role, acts as an adapter protein that mediates cell signaling pathways involved in cellular functions such as cell adhesion and migration, tissue organization, and the regulation of the immune response. Plays a role in integrin-mediated cell adhesion through BCAR1-CRK-RAPGEF1 signaling and activation of the small GTPase RAP1. Promotes cell migration and invasion through the extracellular matrix. Required for marginal zone B-cell development and thymus-independent type 2 immune responses. Mediates migration and adhesion of B cells in the splenic marginal zone via promoting hyperphosphorylation of NEDD9/CASL. Plays a role in CXCL13-induced chemotaxis of B-cells. Plays a role in the migration of olfactory sensory neurons (OSNs) into the forebrain and the innervation of the olfactory bulb by the OSN axons during development. Required for the efficient tyrosine phosphorylation of BCAR1 in OSN axons. Important regulator of chemokine-induced, integrin-mediated T lymphocyte adhesion and migration, acting upstream of RAP1. Required for tissue-specific adhesion of T lymphocytes to peripheral tissues. Required for basal and CXCL2 stimulated serine-threonine phosphorylation of NEDD9. May be involved in the regulation of T-cell receptor-mediated IL2 production through the activation of the JNK pathway in T-cells. Its function is as follows. May be involved in the BCAR1/CAS-mediated JNK activation pathway. The protein is SH2 domain-containing protein 3C (SH2D3C) of Homo sapiens (Human).